Consider the following 177-residue polypeptide: Platelet glycoprotein IX (177 aa).

The signal sequence occupies residues 1–16; that stretch reads MPAWGALFLLWATAEA. The region spanning 17 to 51 is the LRRNT domain; it reads TKDCPSPCTCRALETMGLWVDCRGHGLTALPALPA. The Extracellular portion of the chain corresponds to 17–147; sequence TKDCPSPCTC…QLQASWVRPG (131 aa). N-linked (GlcNAc...) asparagine glycosylation occurs at Asn60. The LRR repeat unit spans residues 60–83; the sequence is NNSLQSVPPGAFDHLPQLQTLDVT. Positions 85-137 constitute an LRRCT domain; sequence NPWHCDCSLTYLRLWLEDRTPEALLQVRCASPSLAAHGPLGRLTGYQLGSCGW. The helical transmembrane segment at 148 to 168 threads the bilayer; that stretch reads VLWDVALVAVAALGLALLAGL. Residues 169–177 are Cytoplasmic-facing; it reads LCATTEALD.

Two GP-Ib beta are disulfide-linked to one GP-Ib alpha. GP-IX is complexed with the GP-Ib heterodimer via a non covalent linkage.

It is found in the membrane. Its function is as follows. The GPIb-V-IX complex functions as the vWF receptor and mediates vWF-dependent platelet adhesion to blood vessels. The adhesion of platelets to injured vascular surfaces in the arterial circulation is a critical initiating event in hemostasis. GP-IX may provide for membrane insertion and orientation of GP-Ib. The chain is Platelet glycoprotein IX (GP9) from Homo sapiens (Human).